The chain runs to 698 residues: Transcription factor cwo (698 aa).

A basic motif; degenerate region spans residues 62 to 75 (QDPLSHRIIEKRRR). The 56-residue stretch at 62-117 (QDPLSHRIIEKRRRDRMNSCLADLSRLIPPQYQRKGRGRIEKTEIIEMAIRHLKHL) folds into the bHLH domain. A helix-loop-helix motif region spans residues 76–117 (DRMNSCLADLSRLIPPQYQRKGRGRIEKTEIIEMAIRHLKHL). Residues 128-159 (YRSGYMDCMKEAAKFLYDVHMQDFCHRLLGRL) form the Orange domain. Disordered regions lie at residues 257–319 (SSPA…ASST) and 349–369 (STAP…FESS). Low complexity predominate over residues 280-318 (APPAADNVPSNSTGSGSAAACAGGNSNSSGSNSSNAASS). The span at 359 to 369 (TDSSHHDFESS) shows a compositional bias: basic and acidic residues.

As to expression, expressed in adult brain where it is detected in the dorsal lateral neurons, small and large ventral lateral neurons and dorsal neurons 1, 2 and 3 (at protein level). Expressed at constant levels in a 12 hour light / 12 hour day cycle (at protein level). Strongly expressed in pacemaker neurons. In adults, mRNA expression oscillates in a circadian manner with a peak at around 14 hour Zeitgeber time. mRNA levels oscillate in a rhythmic manner in both 12 hour light / 12 hour dark and constant dark conditions with a morning peak around the time of lights-on and an evening peak around the time of lights-off in light/dark conditions. During stage 8 of embryonic development, expressed in the anterior and posterior midgut primordia and expression in the gut continues throughout embryonic development. During germ band retraction, expression is initiated in many tissues in a prominent segmentally repeated pattern. Later, expression is ubiquitous but has higher levels in segmentally repeated clusters of cells. Expression is also found in cells of the amnioserosa, in the head region, in posterior spiracles and in tracheal trees.

Its subcellular location is the nucleus. Its function is as follows. Plays a role in the regulation of circadian rhythms. Transcriptional repressor which inhibits Clock-mediated transcriptional activation by binding to E boxes in the promoters of Clock target genes and repressing their transcription. E box binding activity is time-dependent with higher binding activity seen in the early morning (zeitgeber time 2) than early evening (zeitgeber time 14) and is dependent on the presence of the circadian protein per. It is likely that per binds to Clock-cycle heterodimers, reducing their affinity for E box binding and allowing cwo to bind instead. Negatively regulates its own expression. This is Transcription factor cwo from Drosophila melanogaster (Fruit fly).